Here is a 141-residue protein sequence, read N- to C-terminus: Hemoglobin subunit alpha-1 (141 aa).

A Globin domain is found at 1-141 (VLTEDDKNHI…VAKTLVAHYR (141 aa)). Residue His58 participates in O2 binding. His87 serves as a coordination point for heme b.

This sequence belongs to the globin family. Heterotetramer of two alpha chains and two beta chains. As to expression, red blood cells.

Its function is as follows. Involved in oxygen transport from the lung to the various peripheral tissues. The chain is Hemoglobin subunit alpha-1 from Iguana iguana (Common iguana).